The sequence spans 1100 residues: Guanylate cyclase 2G (1100 aa).

The first 43 residues, 1–43, serve as a signal peptide directing secretion; the sequence is MASRTRSESPLEPRLYAGAGSRADHPSLVLMLSVVMLVTCLEA. The Extracellular segment spans residues 44 to 481; sequence AKLTVGFHAP…VAGMTVTVTA (438 aa). N55, N85, N94, N217, N225, N238, N418, N440, and N443 each carry an N-linked (GlcNAc...) asparagine glycan. A helical membrane pass occupies residues 482–502; the sequence is VIPTVTFLVLASAAAITGLML. The Cytoplasmic portion of the chain corresponds to 503–1100; it reads WRLRGKVQSH…EEEAKVSEIL (598 aa). Positions 546 to 837 constitute a Protein kinase domain; that stretch reads SDTSTVKASA…EASPRGHVSI (292 aa). The Guanylate cyclase domain occupies 901–1031; that stretch reads TIFFSDIVGF…DTVNMASRME (131 aa).

The protein belongs to the adenylyl cyclase class-4/guanylyl cyclase family. In terms of assembly, homooligomer. In vitro interacts with NPR1/GC-A. N-glycosylated. In terms of tissue distribution, highly expressed in testis.

The protein localises to the cell membrane. The enzyme catalyses GTP = 3',5'-cyclic GMP + diphosphate. This chain is Guanylate cyclase 2G (Gucy2g), found in Mus musculus (Mouse).